The primary structure comprises 252 residues: F-box/SPRY domain-containing protein 1 (252 aa).

The F-box domain maps to 1 to 48; it reads MVDPLCNYNVLEAIFSYLELNDLYRCSQVCKSWYHFLNDENSDVWRWH. One can recognise a B30.2/SPRY domain in the interval 58-250; sequence VKSDLLASVS…VSMVYLGTPL (193 aa).

Belongs to the FBXO45/Fsn family. As to quaternary structure, component of an E3 ubiquitin ligase complex composed of hiw and Fsn.

The protein resides in the synapse. It functions in the pathway protein modification; protein ubiquitination. Functionally, required in the presynaptic motoneuron to down-regulate the levels of wnd and restrain synaptic terminal growth at the neuromuscular junction (NMJ). This chain is F-box/SPRY domain-containing protein 1, found in Drosophila virilis (Fruit fly).